A 175-amino-acid polypeptide reads, in one-letter code: NADH-ubiquinone oxidoreductase chain 6 (175 aa).

The next 5 membrane-spanning stretches (helical) occupy residues 1–21 (MMTY…VGFS), 25–45 (SPIY…GIVL), 48–68 (GGSF…LVVF), 88–108 (TVLS…GYCI), and 149–169 (YGTW…LVVM).

It belongs to the complex I subunit 6 family. As to quaternary structure, core subunit of respiratory chain NADH dehydrogenase (Complex I) which is composed of 45 different subunits.

It is found in the mitochondrion inner membrane. The enzyme catalyses a ubiquinone + NADH + 5 H(+)(in) = a ubiquinol + NAD(+) + 4 H(+)(out). Its function is as follows. Core subunit of the mitochondrial membrane respiratory chain NADH dehydrogenase (Complex I) which catalyzes electron transfer from NADH through the respiratory chain, using ubiquinone as an electron acceptor. Essential for the catalytic activity and assembly of complex I. This Urotrichus talpoides (Japanese shrew mole) protein is NADH-ubiquinone oxidoreductase chain 6 (MT-ND6).